The chain runs to 51 residues: Mitochondrial import receptor subunit TOM5 homolog (51 aa).

The residue at position 1 (M1) is an N-acetylmethionine. A Glycyl lysine isopeptide (Lys-Gly) (interchain with G-Cter in SUMO2) cross-link involves residue K10. The helical transmembrane segment at S27 to L45 threads the bilayer.

It belongs to the Tom5 family. As to quaternary structure, forms part of the preprotein translocase complex of the outer mitochondrial membrane (TOM complex) which consists of at least 7 different proteins (TOMM5, TOMM6, TOMM7, TOMM20, TOMM22, TOMM40 and TOMM70).

Its subcellular location is the mitochondrion outer membrane. The protein is Mitochondrial import receptor subunit TOM5 homolog of Mus musculus (Mouse).